We begin with the raw amino-acid sequence, 292 residues long: Small ribosomal subunit protein uS9m (292 aa).

Residues 273–292 (VERKKPGKRKARKMPTWVKR) are disordered.

The protein belongs to the universal ribosomal protein uS9 family.

The protein resides in the mitochondrion. In Kluyveromyces marxianus (Yeast), this protein is Small ribosomal subunit protein uS9m (MRPS9).